We begin with the raw amino-acid sequence, 311 residues long: tRNA dimethylallyltransferase (311 aa).

G11–T18 is a binding site for ATP. T13 to T18 provides a ligand contact to substrate. The segment at D36–Q39 is interaction with substrate tRNA.

The protein belongs to the IPP transferase family. In terms of assembly, monomer. Mg(2+) is required as a cofactor.

The catalysed reaction is adenosine(37) in tRNA + dimethylallyl diphosphate = N(6)-dimethylallyladenosine(37) in tRNA + diphosphate. Catalyzes the transfer of a dimethylallyl group onto the adenine at position 37 in tRNAs that read codons beginning with uridine, leading to the formation of N6-(dimethylallyl)adenosine (i(6)A). The chain is tRNA dimethylallyltransferase from Clostridioides difficile (strain 630) (Peptoclostridium difficile).